The following is a 521-amino-acid chain: Ribonuclease Y (521 aa).

A helical membrane pass occupies residues 10–30 (LIITAGVSIALAIVAFFLGYL). Positions 210-270 (TVSVVTLPND…IRREIAKLTL (61 aa)) constitute a KH domain. Positions 336–430 (VLAHSIEVAN…IQAADSVSAA (95 aa)) constitute an HD domain.

This sequence belongs to the RNase Y family.

The protein localises to the cell membrane. In terms of biological role, endoribonuclease that initiates mRNA decay. This chain is Ribonuclease Y, found in Caldicellulosiruptor saccharolyticus (strain ATCC 43494 / DSM 8903 / Tp8T 6331).